The following is a 212-amino-acid chain: MIAARFTNSKQLISQLNCALSPADALCAIAAISDSETTEVAVISALLQLLSRHHHHSSVATAAVEVLVKLAPASVEPLLAAFRSCSDQGFQAWIIQALAMIGDAKAFDLLAEVVGTEVANHCQGNVRRIAARGLGKIGSTVKDREVTDRAIEKLHWALVTPQDWGLRYAAVVSLQEIATPQAHAVLSAAVAGESDWVVRSRMKKALEQIPAC.

Belongs to the CpcE/RpcE/PecE family.

An enzyme involved in the biosynthesis of bilin. The protein is Bilin biosynthesis protein PecF (pecF) of Mastigocladus laminosus (Fischerella sp.).